A 94-amino-acid polypeptide reads, in one-letter code: Co-chaperonin GroES (94 aa).

Belongs to the GroES chaperonin family. As to quaternary structure, heptamer of 7 subunits arranged in a ring. Interacts with the chaperonin GroEL.

Its subcellular location is the cytoplasm. Functionally, together with the chaperonin GroEL, plays an essential role in assisting protein folding. The GroEL-GroES system forms a nano-cage that allows encapsulation of the non-native substrate proteins and provides a physical environment optimized to promote and accelerate protein folding. GroES binds to the apical surface of the GroEL ring, thereby capping the opening of the GroEL channel. This chain is Co-chaperonin GroES, found in Exiguobacterium sp. (strain ATCC BAA-1283 / AT1b).